We begin with the raw amino-acid sequence, 789 residues long: UPF0313 protein VC_1711 (789 aa).

Residues 363-642 (AYDMIKTSVN…KALLRYHDPA (280 aa)) form the Radical SAM core domain. Residues C377, C381, and C384 each coordinate [4Fe-4S] cluster. The segment at 669-789 (PEKDSDLVTP…NTQRQPQRAR (121 aa)) is disordered. A compositionally biased stretch (basic residues) spans 683-698 (KSGRHGANRFATKHTH). Composition is skewed to polar residues over residues 716–726 (RPNSGNKSNQG), 733–763 (PTGS…QRGS), and 778–789 (RGNTQRQPQRAR).

It belongs to the UPF0313 family. It depends on [4Fe-4S] cluster as a cofactor.

The protein is UPF0313 protein VC_1711 of Vibrio cholerae serotype O1 (strain ATCC 39315 / El Tor Inaba N16961).